The following is a 355-amino-acid chain: WD repeat domain phosphoinositide-interacting protein 4 (355 aa).

WD repeat units lie at residues 2-40 (SQQRGVNGLRFNQDQSCFCCAMETGVRIFNIEPLMEKGH) and 185-225 (AHQS…QLVE). The short motif at 226 to 229 (LRRG) is the L/FRRG motif element. Residues 230–269 (TDPATLYCINFSHDSSFLCSSSDKGTVHIFALKDTKLNRR) form a WD 3 repeat.

It belongs to the WD repeat PROPPIN family.

The protein localises to the preautophagosomal structure. Component of the autophagy machinery that controls the major intracellular degradation process by which cytoplasmic materials are packaged into autophagosomes and delivered to lysosomes for degradation. Binds phosphatidylinositol 3-phosphate (PtdIns3P). This Xenopus laevis (African clawed frog) protein is WD repeat domain phosphoinositide-interacting protein 4 (wdr45).